The primary structure comprises 205 residues: Urease accessory protein UreG (205 aa).

14–21 contributes to the GTP binding site; sequence GPVGSGKT.

In terms of assembly, homodimer. UreD, UreF and UreG form a complex that acts as a GTP-hydrolysis-dependent molecular chaperone, activating the urease apoprotein by helping to assemble the nickel containing metallocenter of UreC. The UreE protein probably delivers the nickel.

Its subcellular location is the cytoplasm. With respect to regulation, activation of apourease within the UreDFG-apoprotein complex is inhibited by zinc, copper and cobalt. In terms of biological role, facilitates the functional incorporation of the urease nickel metallocenter. This process requires GTP hydrolysis, probably effectuated by UreG. This is Urease accessory protein UreG from Klebsiella aerogenes (Enterobacter aerogenes).